A 303-amino-acid polypeptide reads, in one-letter code: MQKFDTKTFQGLILTLQDYWARQGCTIVQPLDMEVGAGTSHPMTSLRALGPEPMATAYVQPSRRPTDGRYGENPNRLQHYYQFQVVIKPSPDNIQELYLGSLKELGVDPTIHDIRFVEDNWENPTLGAWGLGWEVWLNGMEVTQFTYFQQVGGLECKPITGEITYGLERLAMYIQGVDSVYDLVWSDGPLGKTTYGDVFHQNEVEQSTYNFEYADVDFLFTCFEQYEKEAQQLLALETPLPLPAYERILKAAHSFNLLDARKAISVTERQRYILRIRTLTKAVAEAYYASREALGFPMCNRNK.

This sequence belongs to the class-II aminoacyl-tRNA synthetase family. In terms of assembly, tetramer of two alpha and two beta subunits.

It localises to the cytoplasm. It catalyses the reaction tRNA(Gly) + glycine + ATP = glycyl-tRNA(Gly) + AMP + diphosphate. This is Glycine--tRNA ligase alpha subunit from Enterobacter sp. (strain 638).